The chain runs to 96 residues: Large ribosomal subunit protein bL21 (96 aa).

A compositionally biased stretch (basic residues) spans 73-84 (KRRKRYQSRNGH). A disordered region spans residues 73–96 (KRRKRYQSRNGHRQQMTQIEVVSL). Residues 85–96 (RQQMTQIEVVSL) show a composition bias toward polar residues.

Belongs to the bacterial ribosomal protein bL21 family. As to quaternary structure, part of the 50S ribosomal subunit. Contacts protein L20.

This protein binds to 23S rRNA in the presence of protein L20. The protein is Large ribosomal subunit protein bL21 of Chlorobium phaeovibrioides (strain DSM 265 / 1930) (Prosthecochloris vibrioformis (strain DSM 265)).